A 1232-amino-acid polypeptide reads, in one-letter code: Anion exchange protein 3 (1232 aa).

Pro residues predominate over residues 1 to 11; the sequence is MANGVIPPPGG. Disordered regions lie at residues 1–316 and 429–498; these read MANG…KLDR and NDDK…GDGH. Over 1-708 the chain is Cytoplasmic; the sequence is MANGVIPPPG…DLRDALHSQC (708 aa). The segment covering 58 to 75 has biased composition (basic and acidic residues); the sequence is DPEKPSRSYSERDFEFHR. Basic residues-rich tracts occupy residues 76 to 97 and 104 to 113; these read HTSH…KLRR and RHTRRKRKKE. Residues 134–152 are compositionally biased toward acidic residues; that stretch reads VDEEEEEEEEEEGESEAEP. Phosphoserine occurs at positions 167, 170, 175, and 198. The span at 200–215 shows a compositional bias: low complexity; sequence QHSSSSPSPRARASRL. A compositionally biased stretch (basic and acidic residues) spans 267-279; sequence DDMKSHRLEDNPG. Residues 280–289 show a composition bias toward basic residues; the sequence is VRRHLVKKPS. Position 295 is an omega-N-methylarginine (Arg295). Positions 305-316 are enriched in basic residues; it reads LRRKKKKKKLDR. The span at 440 to 450 shows a compositional bias: polar residues; that stretch reads NPSSSSMNSVL. Over residues 481–498 the composition is skewed to basic and acidic residues; it reads HDPDAKEKPLHMPGGDGH. The next 5 membrane-spanning stretches (helical) occupy residues 709–731, 737–774, 794–816, 826–847, and 893–910; these read VAAV…GLLG, LMGV…LLVF, VWVG…SFLV, IFAF…YKVF, and ALLS…AFFL. The interval 709–1232 is membrane (anion exchange); that stretch reads VAAVLFIYFA…DEYNELHMPV (524 aa). At 911–925 the chain is on the cytoplasmic side; the sequence is RKFRNSRFLGGKARR. Helical transmembrane passes span 926–946, 980–1002, 1028–1049, 1083–1128, and 1155–1191; these read IIGD…DYSI, PFPP…LIFM, LLLI…LTAA, VTGV…IQLS, and MHLF…TVPL. The S-palmitoyl cysteine moiety is linked to residue Cys1165.

This sequence belongs to the anion exchanger (TC 2.A.31) family. In terms of tissue distribution, expressed in the heart.

Its subcellular location is the cell membrane. It carries out the reaction hydrogencarbonate(in) + chloride(out) = hydrogencarbonate(out) + chloride(in). Its function is as follows. Sodium-independent anion exchanger which mediates the electroneutral exchange of chloride for bicarbonate ions across the cell membrane. May be involved in the regulation of intracellular pH, and the modulation of cardiac action potential. This chain is Anion exchange protein 3 (SLC4A3), found in Homo sapiens (Human).